The chain runs to 864 residues: DNA mismatch repair protein MutS (864 aa).

621-628 (GPNMGGKS) serves as a coordination point for ATP. Residues 804–833 (ETGKPESPAPVASRSSKPSMQADMFAEPQP) are disordered.

Belongs to the DNA mismatch repair MutS family.

Functionally, this protein is involved in the repair of mismatches in DNA. It is possible that it carries out the mismatch recognition step. This protein has a weak ATPase activity. This chain is DNA mismatch repair protein MutS, found in Teredinibacter turnerae (strain ATCC 39867 / T7901).